Here is a 465-residue protein sequence, read N- to C-terminus: Putative ABC transporter ATP-binding protein MG065 homolog (465 aa).

Residues 232-465 form the ABC transporter domain; it reads IELKNVYKYI…PKQVEDINWI (234 aa). 268–275 lines the ATP pocket; it reads GPSGSGKT.

It belongs to the ABC transporter superfamily.

This is Putative ABC transporter ATP-binding protein MG065 homolog from Mycoplasma pneumoniae (strain ATCC 29342 / M129 / Subtype 1) (Mycoplasmoides pneumoniae).